The sequence spans 197 residues: Molybdenum cofactor guanylyltransferase (197 aa).

GTP-binding positions include Leu10–Gly12, Lys23, Asp69, and Asp99. Asp99 lines the Mg(2+) pocket.

The protein belongs to the MobA family. As to quaternary structure, monomer. Requires Mg(2+) as cofactor.

The protein resides in the cytoplasm. The catalysed reaction is Mo-molybdopterin + GTP + H(+) = Mo-molybdopterin guanine dinucleotide + diphosphate. Transfers a GMP moiety from GTP to Mo-molybdopterin (Mo-MPT) cofactor (Moco or molybdenum cofactor) to form Mo-molybdopterin guanine dinucleotide (Mo-MGD) cofactor. This chain is Molybdenum cofactor guanylyltransferase, found in Serratia proteamaculans (strain 568).